The primary structure comprises 343 residues: UDP-N-acetylglucosamine--N-acetylmuramyl-(pentapeptide) pyrophosphoryl-undecaprenol N-acetylglucosamine transferase (343 aa).

Residues 10-12, Asn113, Ser174, and Gln275 contribute to the UDP-N-acetyl-alpha-D-glucosamine site; that span reads TGG.

Belongs to the glycosyltransferase 28 family. MurG subfamily.

The protein resides in the cell membrane. The catalysed reaction is di-trans,octa-cis-undecaprenyl diphospho-N-acetyl-alpha-D-muramoyl-L-alanyl-D-glutamyl-meso-2,6-diaminopimeloyl-D-alanyl-D-alanine + UDP-N-acetyl-alpha-D-glucosamine = di-trans,octa-cis-undecaprenyl diphospho-[N-acetyl-alpha-D-glucosaminyl-(1-&gt;4)]-N-acetyl-alpha-D-muramoyl-L-alanyl-D-glutamyl-meso-2,6-diaminopimeloyl-D-alanyl-D-alanine + UDP + H(+). It participates in cell wall biogenesis; peptidoglycan biosynthesis. Cell wall formation. Catalyzes the transfer of a GlcNAc subunit on undecaprenyl-pyrophosphoryl-MurNAc-pentapeptide (lipid intermediate I) to form undecaprenyl-pyrophosphoryl-MurNAc-(pentapeptide)GlcNAc (lipid intermediate II). The sequence is that of UDP-N-acetylglucosamine--N-acetylmuramyl-(pentapeptide) pyrophosphoryl-undecaprenol N-acetylglucosamine transferase from Wolbachia sp. subsp. Drosophila simulans (strain wRi).